The primary structure comprises 526 residues: Light-independent protochlorophyllide reductase subunit B (526 aa).

A [4Fe-4S] cluster-binding site is contributed by D36. Catalysis depends on D290, which acts as the Proton donor. Residue 425 to 426 (GL) participates in substrate binding.

It belongs to the ChlB/BchB/BchZ family. In terms of assembly, protochlorophyllide reductase is composed of three subunits; ChlL, ChlN and ChlB. Forms a heterotetramer of two ChlB and two ChlN subunits. [4Fe-4S] cluster serves as cofactor.

It carries out the reaction chlorophyllide a + oxidized 2[4Fe-4S]-[ferredoxin] + 2 ADP + 2 phosphate = protochlorophyllide a + reduced 2[4Fe-4S]-[ferredoxin] + 2 ATP + 2 H2O. The protein operates within porphyrin-containing compound metabolism; chlorophyll biosynthesis (light-independent). Component of the dark-operative protochlorophyllide reductase (DPOR) that uses Mg-ATP and reduced ferredoxin to reduce ring D of protochlorophyllide (Pchlide) to form chlorophyllide a (Chlide). This reaction is light-independent. The NB-protein (ChlN-ChlB) is the catalytic component of the complex. This is Light-independent protochlorophyllide reductase subunit B from Prochlorococcus marinus subsp. pastoris (strain CCMP1986 / NIES-2087 / MED4).